A 102-amino-acid polypeptide reads, in one-letter code: MPTKARIRLWSTNVENLNYVITQIRGIVEKTGIEMRGPIPLPTSKLEVPIMRLPHGEGRKKWEKWEMRVHKRLIDIAADERVMRQLMRVRVPEDVYIEIQLI.

This sequence belongs to the universal ribosomal protein uS10 family. Part of the 30S ribosomal subunit.

In terms of biological role, involved in the binding of tRNA to the ribosomes. The sequence is that of Small ribosomal subunit protein uS10 from Saccharolobus islandicus (strain M.16.4 / Kamchatka #3) (Sulfolobus islandicus).